The primary structure comprises 154 residues: Endoribonuclease YbeY (154 aa).

Zn(2+) contacts are provided by H113, H117, and H123.

It belongs to the endoribonuclease YbeY family. Zn(2+) serves as cofactor.

It localises to the cytoplasm. Single strand-specific metallo-endoribonuclease involved in late-stage 70S ribosome quality control and in maturation of the 3' terminus of the 16S rRNA. The chain is Endoribonuclease YbeY from Vibrio cholerae serotype O1 (strain ATCC 39541 / Classical Ogawa 395 / O395).